We begin with the raw amino-acid sequence, 534 residues long: MSFETKPNYLLLTNPDTPLSVCTSPYYSPSGKTASIPSSEASKPEGTNGQWSHLPTGATYVTDEFSSEFQIQNGSTAAQSGNANNYADPLSHRRYFNNVNGYNHHQFYDTASQASVSSPATSVTSSLSPPDSLSNGHTTQRHHIGKAISFCKVCGDKASGYHYGVTSCEGCKGFFRRSIQRKIDYRCLKQQVCEIKRESRNRCQYCRFKKCLDSGMSKDSVRQMKFRNAMRDDKSPDSVFVPEISTLERQEEVDAVYEAVLRAHTTFSFYTDIKIRSIVARPFNVRINEDSKMNRLNAWQIYAHEIDVDIKEVVNFVKEIPKFNFINGNDKAVLLRKNAFPLYLLRIVRGMSNRGLMLRDGRLIDFKSLQLLYGSLADEMLAFANHIITIGCTDGDIALFIVLILCQPLTTEQQFSTNFKSQLQLLEMFDFYKKVLFQKMTCRIDGCDTYKQLMKCIHELNRLNELHKQQLNILRENLSFLNLPPLVVEMFQLSTLPLPVNHNNQENQYTPAPEHQSPQPQQPTPNQQQTPVHC.

2 disordered regions span residues 30 to 53 (SGKTASIPSSEASKPEGTNGQWSH) and 119 to 139 (PATSVTSSLSPPDSLSNGHTT). Positions 119-130 (PATSVTSSLSPP) are enriched in low complexity. A DNA-binding region (nuclear receptor) is located at residues 148-223 (ISFCKVCGDK…SGMSKDSVRQ (76 aa)). NR C4-type zinc fingers lie at residues 151–171 (CKVCGDKASGYHYGVTSCEGC) and 187–211 (CLKQQVCEIKRESRNRCQYCRFKKC). One can recognise an NR LBD domain in the interval 252–493 (EVDAVYEAVL…PPLVVEMFQL (242 aa)). The tract at residues 502-534 (HNNQENQYTPAPEHQSPQPQQPTPNQQQTPVHC) is disordered. A compositionally biased stretch (low complexity) spans 511-534 (PAPEHQSPQPQQPTPNQQQTPVHC).

This sequence belongs to the nuclear hormone receptor family. NR1 subfamily. As to expression, most abundant in embryos.

It localises to the nucleus. Transcriptional regulator which is involved in the sex determination and X chromosome dosage compensation pathways. Directly binds to five 5'-A(G/C)(G/T)(T/G)C(A/G)-3' sites in the promoter of sex-determining factor xol-1 to negatively regulate its expression and promote hermaphrodite development. Together with fox-1 is involved in making the distinction between one and two X-chromosomes. Plays a role in the fox-1-mediated repression of the functionally active isoform (isoform b) of the sex-determining factor xol-1 gene to promote hermaphrodite development. Plays a role in the association of the dosage compensation complex proteins dpy-27 and sdc-3 with the hermaphrodite X chromosomes. The sequence is that of Steroid hormone receptor family member cnr14 from Caenorhabditis elegans.